The sequence spans 62 residues: uncharacterized protein (62 aa).

This is an uncharacterized protein from Mesomycoplasma hyorhinis (Mycoplasma hyorhinis).